The following is a 367-amino-acid chain: 2,6-dihydropseudooxynicotine hydrolase (367 aa).

Residues Glu148, Ser217, Asp300, and His329 contribute to the active site.

This sequence belongs to the AB hydrolase superfamily. In terms of assembly, homodimer.

It catalyses the reaction 2,6-dihydroxypseudooxynicotine + H2O = 2,6-dihydroxypyridine + 4-(methylamino)butanoate + H(+). It participates in alkaloid degradation; nicotine degradation; 2,6-dihydroxypyridine and 4-(methylamino)butanoate from 6-hydroxypseudooxynicotine: step 2/2. L-nicotine is used as a growth substrate. Plays a role in nicotine catabolism by cleaving a C-C bond in 2,6-dihydroxypseudooxynicotine. This is 2,6-dihydropseudooxynicotine hydrolase from Paenarthrobacter nicotinovorans (Arthrobacter nicotinovorans).